A 1093-amino-acid polypeptide reads, in one-letter code: Synaptopodin-2 (1093 aa).

An interaction with VPS18 region spans residues 1-180 (MGTGDFICIS…PDSQRGRVAE (180 aa)). One can recognise a PDZ domain in the interval 6–88 (FICISMTGGA…SLQMLIKRPS (83 aa)). Disordered regions lie at residues 144 to 174 (ENQRSGPDCAGSLKEETGPSYQRAPQMPDSQ) and 211 to 233 (ASGPLVALPGAEKSKSPDPDPNL). Residues 222–233 (EKSKSPDPDPNL) are compositionally biased toward basic and acidic residues. A phosphoserine mark is found at serine 274, serine 310, serine 329, and serine 330. Residues 329–369 (SSEGTEQGEDPRSEKDHSRPHKHRARHARLRRSESLSEKQV) form a disordered region. Threonine 333 is subject to Phosphothreonine. The span at 346–358 (SRPHKHRARHARL) shows a compositional bias: basic residues. Positions 359-369 (RRSESLSEKQV) are enriched in basic and acidic residues. Positions 398-406 (KKRRRRARK) match the Nuclear localization signal motif. Interaction with ACTN2 stretches follow at residues 481–663 (MEML…FYDS), 664–924 (SERI…PPVA), and 901–1093 (QSPT…VVEE). Disordered regions lie at residues 507–803 (AQKE…GTVV) and 834–870 (AVASQNYTPKPTVSTPTVNAVQPGAVGPSNELPGMSG). F-actin binding regions lie at residues 534 to 663 (TSYQ…FYDS) and 664 to 803 (SERI…GTVV). Phosphoserine is present on residues serine 548, serine 549, and serine 551. Polar residues-rich tracts occupy residues 565–579 (PQQNGFSGTSETANI) and 595–611 (SVNQPATPFSPTRNMTS). A Phosphoserine modification is found at serine 604. Residues 607–811 (RNMTSPIADF…VVSSIKIAQP (205 aa)) form an interaction with YWHAB region. Phosphothreonine is present on threonine 610. The residue at position 611 (serine 611) is a Phosphoserine. The tract at residues 615–626 (DFPAPPPYSAVT) is interaction with BAG3. 2 stretches are compositionally biased toward pro residues: residues 617 to 630 (PAPPPYSAVTPPPD) and 644 to 655 (AQPPPWPQPAPW). A PPPY motif motif is present at residues 619-622 (PPPY). A Phosphotyrosine modification is found at tyrosine 622. At threonine 626 the chain carries Phosphothreonine. Over residues 663–674 (SSERIASRDERI) the composition is skewed to basic and acidic residues. The tract at residues 664 to 916 (SERIASRDER…LPASWKYSSN (253 aa)) is F-actin bundling activity. A phosphoserine mark is found at serine 705 and serine 729. Positions 751–900 (AKQKTPPPVA…DTVQAHAARA (150 aa)) are actin binding. Residues threonine 755 and threonine 774 each carry the phosphothreonine modification. Residues 762-784 (KPAVKSSSSQPVTPVSPVWSPGV) show a composition bias toward low complexity. Phosphoserine is present on residues serine 777 and serine 781. Polar residues-rich tracts occupy residues 793 to 803 (PTSNPSKGTVV) and 835 to 853 (VASQNYTPKPTVSTPTVNA). The tract at residues 810 to 1093 (QPSYPPARPA…QVWKPSVVEE (284 aa)) is interaction with FLNC. Residues serine 902, serine 906, and serine 910 each carry the phosphoserine modification. The segment at 937-956 (ALKSQPSAAQPSKMGKKKGK) is disordered. Positions 1000 to 1019 (LAMKQALPPRPVNAASPTNV) are interaction with ZYX. Serine 1015 is subject to Phosphoserine. Over residues 1041-1050 (SSPVSASPVP) the composition is skewed to low complexity. The interval 1041–1064 (SSPVSASPVPVGIPTSPKQESASS) is disordered. Serine 1056 carries the post-translational modification Phosphoserine.

The protein belongs to the synaptopodin family. As to quaternary structure, may self-associate in muscle cells under oxidative stress. Binds F-actin. Interacts with ACTN2; ACTN2 is proposed to anchor SYOP2 at Z lines in mature myocytes. Interacts with AKAP6, PPP3CA and CAMK2A. Interacts (phosphorylated form) with YWHAB; YWHAB competes with ACTN2 for interaction with SYNPO2. Interacts with KPNA2; mediating nuclear import of SYNOP2; dependent on interaction with YWHAB. Interacts with IPO13; may be implicated in SYNOP2 nuclear import. Interacts with ZYX, FLNC, ILK. Interacts with BAG3 (via WW 1 domain). May associate with the CASA complex consisting of HSPA8, HSPB8 and BAG3. Interacts with VPS18. Post-translationally, phosphorylated by PKA, and by CaMK2 at multiple sites. Dephosphorylated by calcineurin; abrogating interaction with YWHAB and impairing nuclear import. Phosphorylated by ILK. Expressed in heart muscle. Isoform 5 is specifically expressed in skeletal muscle.

It localises to the nucleus. The protein resides in the cytoplasm. Its subcellular location is the cytoskeleton. The protein localises to the myofibril. It is found in the sarcomere. It localises to the z line. The protein resides in the cell junction. Its subcellular location is the focal adhesion. Has an actin-binding and actin-bundling activity. Can induce the formation of F-actin networks in an isoform-specific manner. At the sarcomeric Z lines is proposed to act as adapter protein that links nascent myofibers to the sarcolemma via ZYX and may play a role in early assembly and stabilization of the Z lines. Involved in autophagosome formation. May play a role in chaperone-assisted selective autophagy (CASA) involved in Z lines maintenance in striated muscle under mechanical tension; may link the client-processing CASA chaperone machinery to a membrane-tethering and fusion complex providing autophagosome membranes. Involved in regulation of cell migration. May be a tumor suppressor. In terms of biological role, involved in regulation of cell migration. Can induce formation of thick, irregular actin bundles in the cell body. Its function is as follows. Involved in regulation of cell migration. Can induce long, well-organized actin bundles frequently orientated in parallel along the long axis of the cell showing characteristics of contractile ventral stress fibers. Functionally, involved in regulation of cell migration. Can induce an amorphous actin meshwork throughout the cell body containing a mixture of long and short, randomly organized thick and thin actin bundles. Can induce long, well-organized actin bundles frequently orientated in parallel along the long axis of the cell showing characteristics of contractile ventral stress fibers. In terms of biological role, involved in regulation of cell migration in part dependent on the Rho-ROCK cascade; can promote formation of nascent focal adhesions, actin bundles at the leading cell edge and lamellipodia. Can induce formation of thick, irregular actin bundles in the cell body; the induced actin network is associated with enhanced cell migration in vitro. The polypeptide is Synaptopodin-2 (SYNPO2) (Homo sapiens (Human)).